A 200-amino-acid chain; its full sequence is MLSYLSGTLIEKFSTEIVVEVNGVGYLLNISATTHEKLPAIGNQIKILTYLYVREDALQLYGFITTEDREVFKLLIAISGVGPKLAQTILSGMSTAQLRESVIAGDTKALTAIAGVGKKTAERIILELKDKLVKLDLKIDIKETAFRSDKQQVRNDAYSALISLGFTKSIAEKAMRAAIAEVPDGSVDDLIRVALRHVQS.

Positions Met1–Ile64 are domain I. Residues Thr65–Glu143 form a domain II region. Residues Thr144–Ser148 form a flexible linker region. Residues Asp149 to Ser200 form a domain III region.

This sequence belongs to the RuvA family. As to quaternary structure, homotetramer. Forms an RuvA(8)-RuvB(12)-Holliday junction (HJ) complex. HJ DNA is sandwiched between 2 RuvA tetramers; dsDNA enters through RuvA and exits via RuvB. An RuvB hexamer assembles on each DNA strand where it exits the tetramer. Each RuvB hexamer is contacted by two RuvA subunits (via domain III) on 2 adjacent RuvB subunits; this complex drives branch migration. In the full resolvosome a probable DNA-RuvA(4)-RuvB(12)-RuvC(2) complex forms which resolves the HJ.

It is found in the cytoplasm. The RuvA-RuvB-RuvC complex processes Holliday junction (HJ) DNA during genetic recombination and DNA repair, while the RuvA-RuvB complex plays an important role in the rescue of blocked DNA replication forks via replication fork reversal (RFR). RuvA specifically binds to HJ cruciform DNA, conferring on it an open structure. The RuvB hexamer acts as an ATP-dependent pump, pulling dsDNA into and through the RuvAB complex. HJ branch migration allows RuvC to scan DNA until it finds its consensus sequence, where it cleaves and resolves the cruciform DNA. The chain is Holliday junction branch migration complex subunit RuvA from Chloroherpeton thalassium (strain ATCC 35110 / GB-78).